The sequence spans 520 residues: T-box transcription factor TBX22 (520 aa).

The interval 1–91 (MALSSRARAF…NSSESLEEKD (91 aa)) is disordered. A compositionally biased stretch (basic and acidic residues) spans 33-49 (PELREKKGGEEEEERRS). Residues 67-84 (STSASSGCGSDSGYGNSS) are compositionally biased toward low complexity. Positions 96-283 (LQGSELWKRF…RNPFAKGFRD (188 aa)) form a DNA-binding region, T-box.

As to expression, seems to be expressed at a low level.

It is found in the nucleus. In terms of biological role, probable transcriptional regulator involved in developmental processes. This is major determinant crucial to palatogenesis. The protein is T-box transcription factor TBX22 (TBX22) of Homo sapiens (Human).